The sequence spans 399 residues: MVEAGTRDPLESALLDSRYLVQAKIASGGTSTVYRGLDVRLDRPVALKVMDARYAGDEQFLTRFRLEARAVARLNNRALVAVYDQGKDGRHPFLVMELIEGGTLRELLIERGPMPPHAVVAVLRPVLGGLAAAHRAGLVHRDVKPENILISDDGDVKLADFGLVRAVAAASITSTGVILGTAAYLSPEQVRDGNADPRSDVYSVGVLVYELLTGHTPFTGDSALSIAYQRLDADVPRASAVIDGVPPQFDELVACATARNPADRYADAIAMGADLEAIAEELALPEFRVPAPRNSAQHRSAALYRSRITQQGQLGAKPVHHPTRQLTRQPGDCSEPASGSEPEHEPITGQFAGIAIEEFIWARQHARRMVLVWVSVVLAITGLVASAAWTIGSNLSGLL.

Over 1 to 368 the chain is Cytoplasmic; sequence MVEAGTRDPL…FIWARQHARR (368 aa). The region spanning 19-278 is the Protein kinase domain; sequence YLVQAKIASG…IAMGADLEAI (260 aa). Residues 25–33 and K48 each bind ATP; that span reads IASGGTSTV. The active-site Proton acceptor is D142. The disordered stretch occupies residues 312-346; it reads GQLGAKPVHHPTRQLTRQPGDCSEPASGSEPEHEP. A helical membrane pass occupies residues 369–389; it reads MVLVWVSVVLAITGLVASAAW. The Extracellular portion of the chain corresponds to 390 to 399; sequence TIGSNLSGLL.

Belongs to the protein kinase superfamily. Ser/Thr protein kinase family. In terms of processing, autophosphorylated.

It localises to the cell membrane. It catalyses the reaction L-seryl-[protein] + ATP = O-phospho-L-seryl-[protein] + ADP + H(+). The catalysed reaction is L-threonyl-[protein] + ATP = O-phospho-L-threonyl-[protein] + ADP + H(+). The protein is Serine/threonine-protein kinase PknL (pknL) of Mycobacterium bovis (strain ATCC BAA-935 / AF2122/97).